Reading from the N-terminus, the 311-residue chain is Sulfate adenylyltransferase subunit 2 (311 aa).

This sequence belongs to the PAPS reductase family. CysD subfamily. Heterodimer composed of CysD, the smaller subunit, and CysN.

The catalysed reaction is sulfate + ATP + H(+) = adenosine 5'-phosphosulfate + diphosphate. Its pathway is sulfur metabolism; hydrogen sulfide biosynthesis; sulfite from sulfate: step 1/3. Its function is as follows. With CysN forms the ATP sulfurylase (ATPS) that catalyzes the adenylation of sulfate producing adenosine 5'-phosphosulfate (APS) and diphosphate, the first enzymatic step in sulfur assimilation pathway. APS synthesis involves the formation of a high-energy phosphoric-sulfuric acid anhydride bond driven by GTP hydrolysis by CysN coupled to ATP hydrolysis by CysD. This Methylobacterium sp. (strain 4-46) protein is Sulfate adenylyltransferase subunit 2.